Here is a 187-residue protein sequence, read N- to C-terminus: 3'-5' DNA exonuclease Cap18 (187 aa).

The Exonuclease domain maps to 9–173; that stretch reads VSVDVETSGP…HDARYQAELF (165 aa). The Mg(2+) site is built by D12, M25, H160, and D165. H160 functions as the Proton donor/acceptor in the catalytic mechanism.

The protein belongs to the Cap18 exonuclease family. In terms of assembly, homodimer.

Its function is as follows. Effector component of a CBASS antivirus system. CBASS (cyclic oligonucleotide-based antiphage signaling system) provides immunity against bacteriophage. The CD-NTase protein synthesizes cyclic nucleotides in response to infection; these serve as specific second messenger signals. The signals activate a diverse range of effectors, leading to bacterial cell death and thus abortive phage infection. A type III CBASS system. A sequence non-specific 3'-5' DNA exonuclease that preferentially degrades ssDNA with 3' overhangs or a mismatch at the 3' end. Expression of this CBASS system (Cap17-CapW-CdnC-Cap7-Cap6-Cap18-Cap19) in a susceptible E.coli (strain JP313) confers resistance to bacteriophage lambda cI--. This Escherichia coli protein is 3'-5' DNA exonuclease Cap18.